Here is a 259-residue protein sequence, read N- to C-terminus: GEM-like protein 1 (259 aa).

Over residues 1–11 the composition is skewed to basic and acidic residues; the sequence is MSGQENHDHGR. Residues 1–79 form a disordered region; the sequence is MSGQENHDHG…PSPAPRNTMD (79 aa). Low complexity predominate over residues 13–30; that stretch reads SSTPAAASEPSKAAAHSS. The region spanning 138 to 215 is the GRAM domain; that stretch reads KVFKQTFDCL…NQLKAVNPST (78 aa).

It belongs to the GEM family. Interacts with AFH1.

This is GEM-like protein 1 (FIP1) from Arabidopsis thaliana (Mouse-ear cress).